The chain runs to 270 residues: MEDQMANLRLTDFEFFRIILPGSSKTKLKLPYKFARELGDRELREARLRVAGEGRRPWDVKVFDDDVSGDVYLGRGWQEFARAHDLRDGHFLVFRYDGAAAFTVTVFDETMCRRDYRRHHDAAESGSSSSSDSSDAAAAVATAAAEGVGDVALSQFAVTLRQCNLEDKQAQYLNVPMEFQEAHEYARREKVVLRMRGEAWTVRLKHSRRERGQRTAFRYGWHRFCVDNGLAVGDTCFFRVLREGDLRRGGAADDHVLKVAVRKADGTTLE.

DNA-binding regions (TF-B3) lie at residues 13–110 (FEFF…FDET) and 158–265 (VTLR…RKAD).

It is found in the nucleus. The chain is B3 domain-containing protein Os03g0212300 from Oryza sativa subsp. japonica (Rice).